The chain runs to 347 residues: NADH-ubiquinone oxidoreductase chain 2 (347 aa).

Helical transmembrane passes span 13-33 (IFTG…WLGL), 55-75 (AAIK…MAIL), 96-116 (LMIV…FWVP), 122-142 (VPLT…ISIM), 151-171 (TNIL…GGLN), 178-198 (ILAY…PYNP), 199-219 (DITI…FLIL), 237-257 (LTWL…LPPL), 274-294 (GNLI…YFYV), and 326-346 (LPTL…ILSI).

The protein belongs to the complex I subunit 2 family. Core subunit of respiratory chain NADH dehydrogenase (Complex I) which is composed of 45 different subunits. Interacts with TMEM242.

It is found in the mitochondrion inner membrane. The enzyme catalyses a ubiquinone + NADH + 5 H(+)(in) = a ubiquinol + NAD(+) + 4 H(+)(out). In terms of biological role, core subunit of the mitochondrial membrane respiratory chain NADH dehydrogenase (Complex I) which catalyzes electron transfer from NADH through the respiratory chain, using ubiquinone as an electron acceptor. Essential for the catalytic activity and assembly of complex I. This Pongo abelii (Sumatran orangutan) protein is NADH-ubiquinone oxidoreductase chain 2.